Here is a 208-residue protein sequence, read N- to C-terminus: Redox-sensing transcriptional repressor Rex (208 aa).

The segment at residues Leu16 to Phe55 is a DNA-binding region (H-T-H motif). NAD(+) is bound at residue Gly90–Gly95.

This sequence belongs to the transcriptional regulatory Rex family. Homodimer.

The protein localises to the cytoplasm. Its function is as follows. Modulates transcription in response to changes in cellular NADH/NAD(+) redox state. The polypeptide is Redox-sensing transcriptional repressor Rex (Pediococcus pentosaceus (strain ATCC 25745 / CCUG 21536 / LMG 10740 / 183-1w)).